Consider the following 1128-residue polypeptide: Major DNA-binding protein (1128 aa).

The segment at 1104-1128 is required for nuclear localization; sequence LGGGGQGSGGRRKRRLATVLPGLEV.

The protein belongs to the herpesviridae major DNA-binding protein family. In terms of assembly, homooligomers. Forms double-helical filaments necessary for the formation of replication compartments within the host nucleus. Interacts with the origin-binding protein. Interacts with the helicase primase complex; this interaction stimulates primer synthesis activity of the helicase-primase complex. Interacts with the DNA polymerase. Interacts with the alkaline exonuclease; this interaction increases its nuclease processivity.

Its subcellular location is the virion tegument. It is found in the host nucleus. In terms of biological role, plays several crucial roles in viral infection. Participates in the opening of the viral DNA origin to initiate replication by interacting with the origin-binding protein. May disrupt loops, hairpins and other secondary structures present on ssDNA to reduce and eliminate pausing of viral DNA polymerase at specific sites during elongation. Promotes viral DNA recombination by performing strand-transfer, characterized by the ability to transfer a DNA strand from a linear duplex to a complementary single-stranded DNA circle. Can also catalyze the renaturation of complementary single strands. Additionally, reorganizes the host cell nucleus, leading to the formation of prereplicative sites and replication compartments. This process is driven by the protein which can form double-helical filaments in the absence of DNA. This is Major DNA-binding protein from Epstein-Barr virus (strain GD1) (HHV-4).